The chain runs to 400 residues: Enoyl-[acyl-carrier-protein] reductase [NADH] 1 (400 aa).

NAD(+) contacts are provided by residues 48 to 53 (GSSSGY), 74 to 75 (FE), 111 to 112 (DA), and 139 to 140 (LA). Tyr-225 contacts substrate. The Proton donor role is filled by Tyr-235. Residues Lys-244 and 273-275 (VVT) each bind NAD(+).

It belongs to the TER reductase family. In terms of assembly, monomer.

It catalyses the reaction a 2,3-saturated acyl-[ACP] + NAD(+) = a (2E)-enoyl-[ACP] + NADH + H(+). Its pathway is lipid metabolism; fatty acid biosynthesis. Its function is as follows. Involved in the final reduction of the elongation cycle of fatty acid synthesis (FAS II). Catalyzes the reduction of a carbon-carbon double bond in an enoyl moiety that is covalently linked to an acyl carrier protein (ACP). This Photobacterium profundum (strain SS9) protein is Enoyl-[acyl-carrier-protein] reductase [NADH] 1.